A 559-amino-acid chain; its full sequence is Nuclear speckle splicing regulatory protein 1 (559 aa).

Residues 22–57 (VLQKPSVFGNDSDDDDDETSVSESLQREAAKKQAMK) form a disordered region. 2 positions are modified to phosphoserine: S27 and S33. Residues 32-41 (DSDDDDDETS) show a composition bias toward acidic residues. Positions 105 to 179 (IHNLLKAVEI…EARLDVTKQR (75 aa)) form a coiled coil. Positions 107–171 (NLLKAVEIRK…RERRAAALEA (65 aa)) are necessary for alternative splicing activity. Positions 195 to 534 (EEEVPTCSFR…AKRSNEETVT (340 aa)) are disordered. The segment covering 204 to 219 (REARSEIKEEKSKGYS) has biased composition (basic and acidic residues). A Glycyl lysine isopeptide (Lys-Gly) (interchain with G-Cter in SUMO2) cross-link involves residue K211. Residues S249, S255, and S256 each carry the phosphoserine modification. Basic and acidic residues predominate over residues 251 to 274 (FDAKSSENDEMEGDKGNCRREKGT). T276 carries the phosphothreonine modification. A Glycyl lysine isopeptide (Lys-Gly) (interchain with G-Cter in SUMO2) cross-link involves residue K282. 3 stretches are compositionally biased toward basic and acidic residues: residues 314 to 343 (EKREDEHQERPAREQDSYHTDRDSRKEKRD), 351 to 488 (SHRD…RNPE), and 502 to 521 (RITEECQETGKEQERLHETV). Residues 379 to 428 (KREKDREKYPSREQERHRQRNNYDRHNEKGCEKEEKSKEKEEHVKARKER) are a coiled coil. S458 carries the phosphoserine modification.

This sequence belongs to the NSRP1 family. As to quaternary structure, interacts (via C-terminus) with SRSF1. Interacts (via C-terminus) with SRSF2.

The protein localises to the nucleus. It localises to the nucleus speckle. Functionally, RNA-binding protein that mediates pre-mRNA alternative splicing regulation. This Bos taurus (Bovine) protein is Nuclear speckle splicing regulatory protein 1 (NSRP1).